A 447-amino-acid chain; its full sequence is DNA primase DnaG (447 aa).

The region spanning 200–274 (DSIIVVEGRA…DIDYVARAPE (75 aa)) is the Toprim domain. Residues E206, D248, and D250 each coordinate Mg(2+). The tract at residues 316-339 (ERRRGGARKQEYTKKGSLNPQPQV) is disordered.

The protein belongs to the archaeal DnaG primase family. As to quaternary structure, forms a ternary complex with MCM helicase and DNA. Component of the archaeal exosome complex. Mg(2+) is required as a cofactor.

It catalyses the reaction ssDNA + n NTP = ssDNA/pppN(pN)n-1 hybrid + (n-1) diphosphate.. Functionally, RNA polymerase that catalyzes the synthesis of short RNA molecules used as primers for DNA polymerase during DNA replication. Also part of the exosome, which is a complex involved in RNA degradation. Acts as a poly(A)-binding protein that enhances the interaction between heteromeric, adenine-rich transcripts and the exosome. This is DNA primase DnaG from Pyrococcus furiosus (strain ATCC 43587 / DSM 3638 / JCM 8422 / Vc1).